The primary structure comprises 70 residues: Protein SlyX homolog (70 aa).

The protein belongs to the SlyX family.

In Agrobacterium fabrum (strain C58 / ATCC 33970) (Agrobacterium tumefaciens (strain C58)), this protein is Protein SlyX homolog.